The chain runs to 1413 residues: ABC transporter G family member 33 (1413 aa).

Over residues 1-10 (MGSSFRSSSS) the composition is skewed to low complexity. The segment at 1 to 21 (MGSSFRSSSSRNEHEDGGDEA) is disordered. Residues 11–21 (RNEHEDGGDEA) are compositionally biased toward basic and acidic residues. Positions 140 to 412 (LKLSGVRTNE…FEECGFQCPE (273 aa)) constitute an ABC transporter 1 domain. 172 to 179 (GPPGCGKT) contacts ATP. Positions 490-702 (ELFRACISRE…AEIGLSVNEF (213 aa)) constitute an ABC transmembrane type-2 1 domain. 6 consecutive transmembrane segments (helical) span residues 509–529 (VYLF…TVFI), 546–566 (CLFF…SMTV), 580–600 (FYPA…LSFF), 626–646 (FMIL…IAAI), 652–672 (AAMT…GFAI), and 738–758 (LSAL…ALSF). The ABC transporter 2 domain occupies 813–1065 (ITFQDLNYYV…CVIEYFQNIP (253 aa)). 858–865 (GISGAGKT) lines the ATP pocket. One can recognise an ABC transmembrane type-2 2 domain in the interval 1138-1352 (EQFKSCLWKM…TLNLFFSSQY (215 aa)). The next 7 helical transmembrane spans lie at 1157–1177 (YNLM…LLFW), 1189–1209 (LFTV…NNCT), 1245–1265 (IPYI…MIGF), 1276–1296 (LYAM…LISI), 1302–1322 (VAAI…GFLI), 1330–1350 (WWVW…FFSS), and 1385–1405 (ITAI…AFFV).

It belongs to the ABC transporter superfamily. ABCG family. PDR (TC 3.A.1.205) subfamily. Expressed in roots and stems.

Its subcellular location is the membrane. Its function is as follows. May be a general defense protein. This chain is ABC transporter G family member 33 (ABCG33), found in Arabidopsis thaliana (Mouse-ear cress).